We begin with the raw amino-acid sequence, 412 residues long: MPVNLIAVQPSDLLPVPGVRVGVAEAGIRKANRRDLTLIELAAGSRVAGVFTLNRFCAAPVQLCKQHIAGGDVRALVINTGVANAGTGEQGLADAHATCVAVGRTLGVAPEQVLPFSTGVILEALPVDRLIAGLPAAHADLREDGWFDAAHAIMTTDTLAKAVSRQVEIGGRTVTLTGISKGAGMIKPNMATMLGFLACDAAVSQALLDALTKEAADLSFNSITVDGDTSTNDSFIVVATGQAGNAEIADPLGSDFHALRDAVIDVSIRLAQAIVRDGEGATKFMTIAVEGGLDVVECRKVAYAIGQSPLVKTAFFASDPNLGRILAAIGYAGIQDLDVGGLRVWLGTAAEEVLVAELGGRAPTYREEDGVRVMKEAEITVRVDLGRGRARATVWTCDFSYDYVKINADYRS.

Substrate is bound by residues Thr-155, Lys-181, Thr-192, Glu-279, Asn-407, and Ser-412. Catalysis depends on Thr-192, which acts as the Nucleophile.

It belongs to the ArgJ family. Heterotetramer of two alpha and two beta chains.

It localises to the cytoplasm. It catalyses the reaction N(2)-acetyl-L-ornithine + L-glutamate = N-acetyl-L-glutamate + L-ornithine. The catalysed reaction is L-glutamate + acetyl-CoA = N-acetyl-L-glutamate + CoA + H(+). The protein operates within amino-acid biosynthesis; L-arginine biosynthesis; L-ornithine and N-acetyl-L-glutamate from L-glutamate and N(2)-acetyl-L-ornithine (cyclic): step 1/1. Its pathway is amino-acid biosynthesis; L-arginine biosynthesis; N(2)-acetyl-L-ornithine from L-glutamate: step 1/4. Catalyzes two activities which are involved in the cyclic version of arginine biosynthesis: the synthesis of N-acetylglutamate from glutamate and acetyl-CoA as the acetyl donor, and of ornithine by transacetylation between N(2)-acetylornithine and glutamate. The polypeptide is Arginine biosynthesis bifunctional protein ArgJ (Aromatoleum aromaticum (strain DSM 19018 / LMG 30748 / EbN1) (Azoarcus sp. (strain EbN1))).